Reading from the N-terminus, the 396-residue chain is Putative amidohydrolase YhaA (396 aa).

Asp85 is a catalytic residue. Glu143 (proton acceptor) is an active-site residue. The Zn(2+) site is built by Glu144, Arg182, and His368.

The protein belongs to the peptidase M20A family. Zn(2+) is required as a cofactor. The cofactor is Co(2+).

This is Putative amidohydrolase YhaA (yhaA) from Bacillus subtilis (strain 168).